Here is a 278-residue protein sequence, read N- to C-terminus: Pantothenate synthetase (278 aa).

Met31 to His38 is a binding site for ATP. His38 serves as the catalytic Proton donor. Gln62 contacts (R)-pantoate. Gln62 contacts beta-alanine. Gly148–Asp151 serves as a coordination point for ATP. A (R)-pantoate-binding site is contributed by Gln154. Residues Leu177 and Met185–Arg188 contribute to the ATP site.

It belongs to the pantothenate synthetase family. In terms of assembly, homodimer.

The protein localises to the cytoplasm. It catalyses the reaction (R)-pantoate + beta-alanine + ATP = (R)-pantothenate + AMP + diphosphate + H(+). Its pathway is cofactor biosynthesis; (R)-pantothenate biosynthesis; (R)-pantothenate from (R)-pantoate and beta-alanine: step 1/1. In terms of biological role, catalyzes the condensation of pantoate with beta-alanine in an ATP-dependent reaction via a pantoyl-adenylate intermediate. The polypeptide is Pantothenate synthetase (Acidiphilium cryptum (strain JF-5)).